A 492-amino-acid chain; its full sequence is Fascin-2 (492 aa).

The protein belongs to the fascin family. In terms of tissue distribution, exclusively expressed in the eye, specifically in photoreceptor cells.

It localises to the cytoplasm. The protein localises to the cytoskeleton. Its subcellular location is the cell projection. The protein resides in the stereocilium. Functionally, acts as an actin bundling protein. May play a pivotal role in photoreceptor cell-specific events, such as disk morphogenesis. This is Fascin-2 (FSCN2) from Bos taurus (Bovine).